Consider the following 497-residue polypeptide: Bypass of stop codon protein 6 (497 aa).

Residues 1–72 (MDASSVPPKV…KVKTYPLNYQ (72 aa)) are Lumenal-facing. Residues S37 and S41 each carry the phosphoserine modification. An N-linked (GlcNAc...) asparagine glycan is attached at N49. Residues 73–93 (TVPLVKLQVIACLIMFVVFGM) form a helical membrane-spanning segment. The Cytoplasmic segment spans residues 94-144 (NDQTVGALLPTLIEYYHISRVDVSNVFIVQLCGYVMASLSKERLNKHFGMR). A helical membrane pass occupies residues 145-165 (GGMLLAAGLCIVFLIILATAP). The Lumenal portion of the chain corresponds to 166 to 167 (SS). Residues 168–188 (FYVCMFCGLPLGLGIGILDST) traverse the membrane as a helical segment. Residues 189-205 (GNVLMGSLLVHKNELMG) are Cytoplasmic-facing. The chain crosses the membrane as a helical span at residues 206–226 (IMHGLYGAAAMVTPPLVSYFV). Over 227–232 (EWGHWS) the chain is Lumenal. Residues 233–253 (LFFLIPLFFSIIGMIVIFPAF) form a helical membrane-spanning segment. The Cytoplasmic portion of the chain corresponds to 254–300 (KFETASKYDYLCSVENKESNNDVEEAGDNSLMESTKASPGFFELLRN). A helical transmembrane segment spans residues 301 to 321 (PAIFLYSLYLFLYLGAEITTG). The Lumenal segment spans residues 322–340 (SWFFSYLLETKSSNKVAMS). A helical transmembrane segment spans residues 341 to 361 (YIAASFWTGLTVGRLCLGFVT). Residues 362-373 (ERFFENEYKASK) lie on the Cytoplasmic side of the membrane. A helical transmembrane segment spans residues 374 to 394 (AYAFLTLSSYTLFVLVGLINS). The Lumenal segment spans residues 395–397 (SSV). Residues 398–418 (FYFVVLFFVVFCCGTFIGPLF) traverse the membrane as a helical segment. The Cytoplasmic portion of the chain corresponds to 419 to 439 (PNASIVALQVLPKRLHVSGVG). A helical transmembrane segment spans residues 440-460 (VAVAVGGCGGAAIPYLAGVIA). The Lumenal segment spans residues 461-462 (HT). Residues 463 to 483 (VGIQYIPLLCWIMVALFTLEW) form a helical membrane-spanning segment. Residues 484-497 (TLYPKFIKGHEEYF) lie on the Cytoplasmic side of the membrane.

Belongs to the major facilitator superfamily.

It localises to the golgi apparatus. Its subcellular location is the cis-Golgi network membrane. Probable transporter. The polypeptide is Bypass of stop codon protein 6 (BSC6) (Saccharomyces cerevisiae (strain ATCC 204508 / S288c) (Baker's yeast)).